Reading from the N-terminus, the 175-residue chain is Large ribosomal subunit protein bL17 (175 aa).

The segment at Val124–Asp175 is disordered. The span at Ser161 to Asp175 shows a compositional bias: basic and acidic residues.

The protein belongs to the bacterial ribosomal protein bL17 family. As to quaternary structure, part of the 50S ribosomal subunit. Contacts protein L32.

The protein is Large ribosomal subunit protein bL17 of Geobacter sulfurreducens (strain ATCC 51573 / DSM 12127 / PCA).